A 356-amino-acid polypeptide reads, in one-letter code: Phenylalanine dehydrogenase (356 aa).

Arg43 provides a ligand contact to NAD(+). L-phenylalanine is bound at residue Lys67. Lys79 acts as the Proton donor/acceptor in catalysis. 118 to 119 (PD) contributes to the L-phenylalanine binding site. Residues Asp119, Ser150, Thr154, 183–189 (GLGAVGG), 206–207 (DT), Arg211, 240–241 (AM), and 261–263 (AAN) each bind NAD(+). Asn263 is an L-phenylalanine binding site.

The protein belongs to the Glu/Leu/Phe/Val dehydrogenases family. In terms of assembly, homotetramer, dimer of dimers.

It carries out the reaction L-phenylalanine + NAD(+) + H2O = 3-phenylpyruvate + NH4(+) + NADH + H(+). It functions in the pathway amino-acid biosynthesis; L-phenylalanine biosynthesis; L-phenylalanine from phenylpyruvate (PDH route): step 1/1. Subject to competitive inhibition by 3-phenylpropionate for the conversion of L-phenylalanine to phenylpyruvate. Subject to competitive inhibition by D-phenylalanine for the conversion of phenylpyruvate to L-phenylalanine. In terms of biological role, catalyzes the reversible NAD(+)-dependent oxidative deamination of L-phenylalanine to phenylpyruvate. This is Phenylalanine dehydrogenase from Rhodococcus sp.